The following is a 376-amino-acid chain: Carbamoyl phosphate synthase small chain (376 aa).

The interval 1-187 is CPSase; sequence MKALLALEDG…KEDGSFLWKQ (187 aa). Residues Ser45, Gly239, and Gly241 each coordinate L-glutamine. The 188-residue stretch at 189–376 folds into the Glutamine amidotransferase type-1 domain; the sequence is KIPLIVYDYG…KEVVLLKLGC (188 aa). Cys266 (nucleophile) is an active-site residue. Leu267, Gln270, Asn308, Gly310, and Phe311 together coordinate L-glutamine. Active-site residues include His349 and Glu351.

This sequence belongs to the CarA family. As to quaternary structure, composed of two chains; the small (or glutamine) chain promotes the hydrolysis of glutamine to ammonia, which is used by the large (or ammonia) chain to synthesize carbamoyl phosphate. Tetramer of heterodimers (alpha,beta)4.

The enzyme catalyses hydrogencarbonate + L-glutamine + 2 ATP + H2O = carbamoyl phosphate + L-glutamate + 2 ADP + phosphate + 2 H(+). The catalysed reaction is L-glutamine + H2O = L-glutamate + NH4(+). It functions in the pathway amino-acid biosynthesis; L-arginine biosynthesis; carbamoyl phosphate from bicarbonate: step 1/1. The protein operates within pyrimidine metabolism; UMP biosynthesis via de novo pathway; (S)-dihydroorotate from bicarbonate: step 1/3. Functionally, small subunit of the glutamine-dependent carbamoyl phosphate synthetase (CPSase). CPSase catalyzes the formation of carbamoyl phosphate from the ammonia moiety of glutamine, carbonate, and phosphate donated by ATP, constituting the first step of 2 biosynthetic pathways, one leading to arginine and/or urea and the other to pyrimidine nucleotides. The small subunit (glutamine amidotransferase) binds and cleaves glutamine to supply the large subunit with the substrate ammonia. The sequence is that of Carbamoyl phosphate synthase small chain from Lawsonia intracellularis (strain PHE/MN1-00).